We begin with the raw amino-acid sequence, 233 residues long: Mediator of RNA polymerase II transcription subunit 7 (233 aa).

A Glycyl lysine isopeptide (Lys-Gly) (interchain with G-Cter in SUMO1); alternate cross-link involves residue K185. K185 is covalently cross-linked (Glycyl lysine isopeptide (Lys-Gly) (interchain with G-Cter in SUMO2); alternate). A disordered region spans residues 188–213; that stretch reads PMDADDSNNCTGQSDQQRENSGHRRD. A Phosphoserine modification is found at S194. Over residues 203–213 the composition is skewed to basic and acidic residues; that stretch reads QQRENSGHRRD.

This sequence belongs to the Mediator complex subunit 7 family. In terms of assembly, component of the Mediator complex, which is composed of MED1, MED4, MED6, MED7, MED8, MED9, MED10, MED11, MED12, MED13, MED13L, MED14, MED15, MED16, MED17, MED18, MED19, MED20, MED21, MED22, MED23, MED24, MED25, MED26, MED27, MED29, MED30, MED31, CCNC, CDK8 and CDC2L6/CDK11. The MED12, MED13, CCNC and CDK8 subunits form a distinct module termed the CDK8 module. Mediator containing the CDK8 module is less active than Mediator lacking this module in supporting transcriptional activation. Individual preparations of the Mediator complex lacking one or more distinct subunits have been variously termed ARC, CRSP, DRIP, PC2, SMCC and TRAP.

The protein resides in the nucleus. Component of the Mediator complex, a coactivator involved in the regulated transcription of nearly all RNA polymerase II-dependent genes. Mediator functions as a bridge to convey information from gene-specific regulatory proteins to the basal RNA polymerase II transcription machinery. Mediator is recruited to promoters by direct interactions with regulatory proteins and serves as a scaffold for the assembly of a functional preinitiation complex with RNA polymerase II and the general transcription factors. This is Mediator of RNA polymerase II transcription subunit 7 (MED7) from Sus scrofa (Pig).